The primary structure comprises 159 residues: Phosphopantetheine adenylyltransferase (159 aa).

A substrate-binding site is contributed by T10. Residues 10–11 and H18 contribute to the ATP site; that span reads TF. K42, L74, and R88 together coordinate substrate. Residues 89–91, E99, and 124–130 each bind ATP; these read GLR and NAFISSS.

Belongs to the bacterial CoaD family. As to quaternary structure, homohexamer. Requires Mg(2+) as cofactor.

The protein resides in the cytoplasm. The catalysed reaction is (R)-4'-phosphopantetheine + ATP + H(+) = 3'-dephospho-CoA + diphosphate. It participates in cofactor biosynthesis; coenzyme A biosynthesis; CoA from (R)-pantothenate: step 4/5. Reversibly transfers an adenylyl group from ATP to 4'-phosphopantetheine, yielding dephospho-CoA (dPCoA) and pyrophosphate. In Campylobacter fetus subsp. fetus (strain 82-40), this protein is Phosphopantetheine adenylyltransferase.